Here is a 316-residue protein sequence, read N- to C-terminus: Acetaldehyde dehydrogenase 3 (316 aa).

An NAD(+)-binding site is contributed by 12 to 15; that stretch reads SGNI. Cys132 serves as the catalytic Acyl-thioester intermediate. Residues 163–171 and Asn289 each bind NAD(+); that span reads SAGPGTRAN.

Belongs to the acetaldehyde dehydrogenase family.

The enzyme catalyses acetaldehyde + NAD(+) + CoA = acetyl-CoA + NADH + H(+). The sequence is that of Acetaldehyde dehydrogenase 3 (mhpF) from Comamonas testosteroni (Pseudomonas testosteroni).